Here is a 326-residue protein sequence, read N- to C-terminus: Mitochondrial substrate carrier family protein R (326 aa).

Solcar repeat units follow at residues threonine 9–asparagine 95, lysine 101–isoleucine 214, and valine 226–tyrosine 318. 6 consecutive transmembrane segments (helical) span residues methionine 12–leucine 32, leucine 64–isoleucine 84, valine 104–leucine 124, glycine 185–tyrosine 205, valine 226–alanine 246, and leucine 290–leucine 310.

Belongs to the mitochondrial carrier (TC 2.A.29) family.

Its subcellular location is the mitochondrion inner membrane. Mitochondrial solute carriers shuttle metabolites, nucleotides, and cofactors through the mitochondrial inner membrane. May be involved in the accumulation of coenzyme A in the mitochondrial matrix. The polypeptide is Mitochondrial substrate carrier family protein R (mcfR) (Dictyostelium discoideum (Social amoeba)).